Reading from the N-terminus, the 416-residue chain is ATP-dependent Clp protease ATP-binding subunit ClpX (416 aa).

In terms of domain architecture, ClpX-type ZB spans 1 to 54; sequence MFKFGDEKGQLKCSFCGKSQEQVRKLVAGPGVYICDECIELCNEIIEEELNDDV. Zn(2+) contacts are provided by C13, C16, C35, and C38. 117–124 provides a ligand contact to ATP; the sequence is PTGCGKTL.

It belongs to the ClpX chaperone family. In terms of assembly, component of the ClpX-ClpP complex. Forms a hexameric ring that, in the presence of ATP, binds to fourteen ClpP subunits assembled into a disk-like structure with a central cavity, resembling the structure of eukaryotic proteasomes.

ATP-dependent specificity component of the Clp protease. It directs the protease to specific substrates. Can perform chaperone functions in the absence of ClpP. This is ATP-dependent Clp protease ATP-binding subunit ClpX from Halothermothrix orenii (strain H 168 / OCM 544 / DSM 9562).